The following is a 480-amino-acid chain: Proline--tRNA ligase (480 aa).

Belongs to the class-II aminoacyl-tRNA synthetase family. ProS type 3 subfamily. Homodimer.

Its subcellular location is the cytoplasm. It carries out the reaction tRNA(Pro) + L-proline + ATP = L-prolyl-tRNA(Pro) + AMP + diphosphate. In terms of biological role, catalyzes the attachment of proline to tRNA(Pro) in a two-step reaction: proline is first activated by ATP to form Pro-AMP and then transferred to the acceptor end of tRNA(Pro). The polypeptide is Proline--tRNA ligase (Pyrococcus abyssi (strain GE5 / Orsay)).